Reading from the N-terminus, the 171-residue chain is Co-chaperone protein HscB (171 aa).

The 73-residue stretch at 2 to 74 folds into the J domain; that stretch reads DYFTLFGLPA…LTRAEYLLSL (73 aa).

Belongs to the HscB family. Interacts with HscA and stimulates its ATPase activity. Interacts with IscU.

In terms of biological role, co-chaperone involved in the maturation of iron-sulfur cluster-containing proteins. Seems to help targeting proteins to be folded toward HscA. This chain is Co-chaperone protein HscB, found in Salmonella paratyphi A (strain AKU_12601).